A 209-amino-acid chain; its full sequence is Egg case collagen (209 aa).

The segment at 1–129 (VYMSGXGKPP…YKGNHGFYLV (129 aa)) is nonhelical region. Residues 130–209 (LPAGYPGTPG…DPGLPGEYGV (80 aa)) form a triple-helical region region. Positions 138-209 (PGTPGPRGGP…DPGLPGEYGV (72 aa)) are disordered. The span at 142 to 162 (GPRGGPGDPGMPGEPGVGFPG) shows a compositional bias: gly residues.

Major component of the egg case wall which is secreted by the oviduct. The egg case combines mechanical strength and toughness with high permeability to small molecules and ions. The chain is Egg case collagen from Scyliorhinus canicula (Small-spotted catshark).